The primary structure comprises 954 residues: Glycine dehydrogenase (decarboxylating) (954 aa).

Polar residues predominate over residues 1-13; that stretch reads MTELLQSLSTQNE. Residues 1-24 are disordered; the sequence is MTELLQSLSTQNEFVARHNGPNKS. Residue Lys704 is modified to N6-(pyridoxal phosphate)lysine.

It belongs to the GcvP family. In terms of assembly, the glycine cleavage system is composed of four proteins: P, T, L and H. Requires pyridoxal 5'-phosphate as cofactor.

The enzyme catalyses N(6)-[(R)-lipoyl]-L-lysyl-[glycine-cleavage complex H protein] + glycine + H(+) = N(6)-[(R)-S(8)-aminomethyldihydrolipoyl]-L-lysyl-[glycine-cleavage complex H protein] + CO2. In terms of biological role, the glycine cleavage system catalyzes the degradation of glycine. The P protein binds the alpha-amino group of glycine through its pyridoxal phosphate cofactor; CO(2) is released and the remaining methylamine moiety is then transferred to the lipoamide cofactor of the H protein. This is Glycine dehydrogenase (decarboxylating) from Vibrio campbellii (strain ATCC BAA-1116).